The primary structure comprises 1053 residues: Polyphosphate kinase (1053 aa).

Disordered regions lie at residues 23-155 (LKIN…QLME), 200-245 (VQNP…TKSK), and 302-328 (NNNN…STSP). A compositionally biased stretch (low complexity) spans 32–50 (STTTTTSTTTTTTTTTSTS). Residues 81-102 (VDFEDDYDEESSSFDEEDEDSA) are compositionally biased toward acidic residues. Residues 143–155 (TTANPVQNCQLME) are compositionally biased toward polar residues. The span at 215–239 (SSGSSSSSSSNNNNSNSNSNGNCNS) shows a compositional bias: low complexity. Histidine 800 functions as the Phosphohistidine intermediate in the catalytic mechanism. The interval 1027–1053 (RSSPIDEDSQTQFMNQTNQKHPVIWSK) is disordered. Over residues 1036 to 1046 (QTQFMNQTNQK) the composition is skewed to polar residues.

Belongs to the polyphosphate kinase 1 (PPK1) family. In terms of assembly, hexamer. May form higher oligomeric structures in the presence of ATP.

The protein resides in the vesicle. The enzyme catalyses [phosphate](n) + ATP = [phosphate](n+1) + ADP. Functionally, catalyzes the reversible transfer of the terminal phosphate of ATP to form a long-chain polyphosphate (polyP). Produces polyP in a broad range of chain lengths (50-300 Pi residues). Involved in development (growth and fruiting body formation), sporulation, phagocytosis, cell division and the late stages of cytokinesis. The protein is Polyphosphate kinase (ppkA) of Dictyostelium discoideum (Social amoeba).